The chain runs to 158 residues: MLNQLDNLTERVRGSNKLVDRWLHVRKHLLVAYYNLGGIKPGKESYMRLNEKALDDFCQSLVDYLSAGHFSIYERILHKLESNGQLARAAKIWPQLEANTQQIMDYYDSSLETAIDHDNYLEFQQVLSDIGEALEARFVLEDKLILLVLDAARVKHPA.

Belongs to the Rsd/AlgQ family. In terms of assembly, interacts with RpoD.

It is found in the cytoplasm. Its function is as follows. Binds RpoD and negatively regulates RpoD-mediated transcription activation by preventing the interaction between the primary sigma factor RpoD with the catalytic core of the RNA polymerase and with promoter DNA. May be involved in replacement of the RNA polymerase sigma subunit from RpoD to RpoS during the transition from exponential growth to the stationary phase. This Shigella dysenteriae serotype 1 (strain Sd197) protein is Regulator of sigma D.